We begin with the raw amino-acid sequence, 549 residues long: MSQPSISKSMTIGESGLAVVFAATAFLCVIAAAKALDAPFAFHAALSAAASVAAVFCIVNRYFERPAALPPAEINGRPNYNMGPIKFSSFMAMFWGIAGFLVGLIIASQLAWPALNFDLPWISFGRLRPLHTSAVIFAFGGNVLIATSFYVVQKSCRVRLAGDLAPWFVVVGYNFFILVAGTGYLLGVTQSKEYAEPEWYADLWLTIVWVVYLLVFLATIIKRKEPHIFVANWFYLAFIVTIAVLHLGNNPALPVSAFGSKSYVAWGGIQDAMFQWWYGHNAVGFFLTAGFLAIMYYFIPKRAERPIYSYRLSIIHFWALIFLYIWAGPHHLHYTALPDWTQTLGMTFSIMLWMPSWGGMINGLMTLSGAWDKLRTDPVLRMLVVSVAFYGMSTFEGPMMSIKVVNSLSHYTDWTIGHVHSGALGWVGFVSFGALYCLVPWAWNRKGLYSLKLVNWHFWVATLGIVLYISAMWVSGILQGLMWRAYTSLGFLEYSFIETVEAMHPFYIIRAAGGGLFLIGALIMAYNLWMTVRVGEAEVQMPVALQPAE.

The next 3 helical transmembrane spans lie at 12–32, 39–59, and 87–107; these read IGES…VIAA, PFAF…FCIV, and FSSF…LIIA. H131 is a binding site for heme b. The next 8 membrane-spanning stretches (helical) occupy residues 132–152, 168–188, 201–221, 228–248, 279–299, 312–332, 344–364, and 382–402; these read TSAV…FYVV, FVVV…LLGV, ADLW…ATII, IFVA…LHLG, GHNA…YYFI, LSII…PHHL, LGMT…INGL, and MLVV…MMSI. Cu cation contacts are provided by H280, H330, and H331. Heme b-binding residues include H418 and H420. 3 helical membrane passes run 423-443, 458-478, and 512-532; these read ALGW…PWAW, FWVA…SGIL, and AGGG…WMTV.

The protein belongs to the heme-copper respiratory oxidase family. It depends on Cu(2+) as a cofactor. The cofactor is heme b.

It is found in the cell membrane. It carries out the reaction 4 Fe(II)-[cytochrome c] + O2 + 8 H(+)(in) = 4 Fe(III)-[cytochrome c] + 2 H2O + 4 H(+)(out). The protein operates within energy metabolism; oxidative phosphorylation. Cytochrome c oxidase is the component of the respiratory chain that catalyzes the reduction of oxygen to water. Subunits 1-3 form the functional core of the enzyme complex. Co I is the catalytic subunit of the enzyme. Electrons originating in cytochrome c or a quinol are transferred to the bimetallic center formed by a high-spin heme and copper B. This Bradyrhizobium diazoefficiens (strain JCM 10833 / BCRC 13528 / IAM 13628 / NBRC 14792 / USDA 110) protein is Cytochrome c oxidase subunit 1 homolog, bacteroid (fixN).